A 314-amino-acid chain; its full sequence is Deoxymugineic acid synthase 1-A (314 aa).

The disordered stretch occupies residues 1–21 (MGAGDKTAAGMPRIGMGTAVQ). NADP(+) is bound at residue D44. The Proton donor role is filled by Y49. H112 provides a ligand contact to substrate. NADP(+) is bound by residues 158–159 (AN), Q180, 258–266 (FDEARMREN), and 273–281 (ELTEEEHRR).

It belongs to the aldo/keto reductase family. As to expression, mostly expressed in root tissues, observed in mesocotyl and embryonic roots, seedling roots, crown and seedling leafes, mature bracts, anthers, pistil, caryopsis and embryos.

The enzyme catalyses 2'-deoxymugineate + NAD(+) = 3''-deamino-3''-oxonicotianamine + NADH + H(+). It carries out the reaction 2'-deoxymugineate + NADP(+) = 3''-deamino-3''-oxonicotianamine + NADPH + H(+). The protein operates within siderophore biosynthesis. Its function is as follows. Catalyzes the reduction of a 3''-keto intermediate during the biosynthesis of 2'-deoxymugineic acid (DMA) from L-Met. Involved in the formation of phytosiderophores (MAs) belonging to the mugineic acid family and required to acquire iron. The polypeptide is Deoxymugineic acid synthase 1-A (Triticum aestivum (Wheat)).